A 183-amino-acid chain; its full sequence is Ribosome rescue factor SmrB (183 aa).

A Smr domain is found at 98–173; it reads LDLHGLTQLQ…GDAALLVLIE (76 aa).

It belongs to the SmrB family. As to quaternary structure, associates with collided ribosomes, but not with correctly translating polysomes.

Functionally, acts as a ribosome collision sensor. Detects stalled/collided disomes (pairs of ribosomes where the leading ribosome is stalled and a second ribosome has collided with it) and endonucleolytically cleaves mRNA at the 5' boundary of the stalled ribosome. Stalled/collided disomes form a new interface (primarily via the 30S subunits) that binds SmrB. Cleaved mRNA becomes available for tmRNA ligation, leading to ribosomal subunit dissociation and rescue of stalled ribosomes. The sequence is that of Ribosome rescue factor SmrB from Escherichia coli (strain 55989 / EAEC).